The chain runs to 150 residues: Regulatory protein RecX (150 aa).

It belongs to the RecX family.

The protein localises to the cytoplasm. In terms of biological role, modulates RecA activity. In Ectopseudomonas mendocina (strain ymp) (Pseudomonas mendocina), this protein is Regulatory protein RecX.